A 245-amino-acid polypeptide reads, in one-letter code: 1-(5-phosphoribosyl)-5-[(5-phosphoribosylamino)methylideneamino] imidazole-4-carboxamide isomerase (245 aa).

The active-site Proton acceptor is the Asp-7. The active-site Proton donor is the Asp-129.

The protein belongs to the HisA/HisF family.

The protein resides in the cytoplasm. It catalyses the reaction 1-(5-phospho-beta-D-ribosyl)-5-[(5-phospho-beta-D-ribosylamino)methylideneamino]imidazole-4-carboxamide = 5-[(5-phospho-1-deoxy-D-ribulos-1-ylimino)methylamino]-1-(5-phospho-beta-D-ribosyl)imidazole-4-carboxamide. Its pathway is amino-acid biosynthesis; L-histidine biosynthesis; L-histidine from 5-phospho-alpha-D-ribose 1-diphosphate: step 4/9. This chain is 1-(5-phosphoribosyl)-5-[(5-phosphoribosylamino)methylideneamino] imidazole-4-carboxamide isomerase, found in Shewanella halifaxensis (strain HAW-EB4).